The chain runs to 534 residues: Glucan endo-1,3-beta-glucosidase 12 (534 aa).

Positions 1–24 are cleaved as a signal peptide; it reads MGQRLNLVFWIFVSILAFLNFGMA. Glu-120 acts as the Proton donor in catalysis. N-linked (GlcNAc...) asparagine glycosylation is present at Asn-127. The Nucleophile role is filled by Glu-264. N-linked (GlcNAc...) asparagine glycosylation is found at Asn-336, Asn-357, and Asn-375. Residues 348–379 are disordered; the sequence is ENTTPVSPTNSTTGTSPSPSSSPIINGNSTVT. Residues 349–377 are compositionally biased toward low complexity; the sequence is NTTPVSPTNSTTGTSPSPSSSPIINGNST. Cys-392 and Cys-455 form a disulfide bridge. Asn-485, Asn-491, and Asn-495 each carry an N-linked (GlcNAc...) asparagine glycan. Ser-507 is lipidated: GPI-anchor amidated serine. Residues 508–534 constitute a propeptide, removed in mature form; sequence STNEAFRQMVVAVSVLLPCFVVCSSIW.

It belongs to the glycosyl hydrolase 17 family. Post-translationally, contains two additional disulfide bonds.

Its subcellular location is the secreted. The protein localises to the cell wall. It is found in the cell membrane. It catalyses the reaction Hydrolysis of (1-&gt;3)-beta-D-glucosidic linkages in (1-&gt;3)-beta-D-glucans.. The polypeptide is Glucan endo-1,3-beta-glucosidase 12 (Arabidopsis thaliana (Mouse-ear cress)).